Here is a 263-residue protein sequence, read N- to C-terminus: uncharacterized protein (263 aa).

It belongs to the AtsA family.

It localises to the plastid. Its subcellular location is the chloroplast. This is an uncharacterized protein from Porphyra purpurea (Red seaweed).